The chain runs to 433 residues: Enolase (433 aa).

Residue Gln-166 participates in (2R)-2-phosphoglycerate binding. Glu-208 serves as the catalytic Proton donor. Residues Asp-245, Glu-290, and Asp-317 each contribute to the Mg(2+) site. Positions 342, 371, 372, and 393 each coordinate (2R)-2-phosphoglycerate. The active-site Proton acceptor is Lys-342.

The protein belongs to the enolase family. Mg(2+) serves as cofactor.

Its subcellular location is the cytoplasm. It is found in the secreted. The protein localises to the cell surface. It catalyses the reaction (2R)-2-phosphoglycerate = phosphoenolpyruvate + H2O. The protein operates within carbohydrate degradation; glycolysis; pyruvate from D-glyceraldehyde 3-phosphate: step 4/5. Catalyzes the reversible conversion of 2-phosphoglycerate (2-PG) into phosphoenolpyruvate (PEP). It is essential for the degradation of carbohydrates via glycolysis. The polypeptide is Enolase (Clostridium novyi (strain NT)).